A 427-amino-acid chain; its full sequence is Proteinase-activated receptor 1 (427 aa).

An N-terminal signal peptide occupies residues 1–21 (MGPRWLLLWAAGLGLCSPLVS). Positions 22 to 41 (ARTRGPRPGTDPTNGTLGPR) are cleaved as a propeptide — removed for receptor activation. The segment at 23 to 87 (RTRGPRPGTD…RSSPPQKSPP (65 aa)) is disordered. Asn-35 carries N-linked (GlcNAc...) asparagine glycosylation. Residues 42 to 104 (SFFLRNSNDG…SGYLTSAWLT (63 aa)) lie on the Extracellular side of the membrane. The span at 58-68 (PEDEDSSEGEF) shows a compositional bias: acidic residues. Asn-77 carries N-linked (GlcNAc...) asparagine glycosylation. The helical transmembrane segment at 105–130 (VFIPSVYTGVFLVSLPLNIMAVVVFV) threads the bilayer. Residues 131–139 (LKMKVKKPA) lie on the Cytoplasmic side of the membrane. Residues 140-159 (VVYMLHLAAADVLFVCVLPF) form a helical membrane-spanning segment. Residues 160–178 (KISYYFSGSDWRFGSAMCR) lie on the Extracellular side of the membrane. Cys-177 and Cys-256 are joined by a disulfide. A helical transmembrane segment spans residues 179–200 (FVTAAFYGNMYASIMLMTAISV). At 201–220 (DRFLAVVYPIQSLSWRTLGR) the chain is on the cytoplasmic side. The chain crosses the membrane as a helical span at residues 221 to 241 (ASFICLAIWAMAIAGVAPLLL). The Extracellular segment spans residues 242 to 270 (QEQATQVPGLNITACHDVLNQTLLEGYYS). N-linked (GlcNAc...) asparagine glycosylation is found at Asn-252 and Asn-261. The helical transmembrane segment at 271 to 290 (YYFSAFSAVFFFVPLTLSTV) threads the bilayer. The Cytoplasmic segment spans residues 291–313 (SYVSIIRCLSSSTVANQNKKSRA). Residues 314–336 (LLLSAAVFCIFILCFGPTNILLL) traverse the membrane as a helical segment. Residues 337 to 351 (LHYAFLSSDPMTEAA) are Extracellular-facing. A helical membrane pass occupies residues 352-376 (YFAYLLCVCVSSISCCIDPLIYYYA). At 377–427 (SSECQRHLFAILHCKESSDPGSCNSSGQLMPSKMDTCSSNLSSSLYKKLLT) the chain is on the cytoplasmic side. Ser-420 carries the post-translational modification Phosphoserine.

Belongs to the G-protein coupled receptor 1 family. Proteolytic cleavage by thrombin generates a new N-terminus that functions as a tethered ligand. Also proteolytically cleaved by cathepsin CTSG. Post-translationally, phosphorylated in the C-terminal tail; probably mediating desensitization prior to the uncoupling and internalization of the receptor.

It localises to the cell membrane. In terms of biological role, high affinity receptor that binds the activated thrombin, leading to calcium release from intracellular stores. The thrombin-activated receptor signaling pathway is mediated through PTX-insensitive G proteins, activation of phospholipase C resulting in the production of 1D-myo-inositol 1,4,5-trisphosphate (InsP3) which binds to InsP3 receptors causing calcium release from the stores. In astrocytes, the calcium released into the cytosol allows the Ca(2+)-dependent release of L-glutamate into the synaptic cleft through BEST1, that targets the neuronal postsynaptic GRIN2A/NMDAR receptor resulting in the synaptic plasticity regulation. May play a role in platelets activation and in vascular development. Mediates up-regulation of pro-inflammatory cytokines, such as MCP-1/CCL2 and IL6, triggered by coagulation factor Xa (F10) in cardiac fibroblasts and umbilical vein endothelial cells. This Bos taurus (Bovine) protein is Proteinase-activated receptor 1.